A 288-amino-acid chain; its full sequence is ATP synthase gamma chain (288 aa).

This sequence belongs to the ATPase gamma chain family. In terms of assembly, F-type ATPases have 2 components, CF(1) - the catalytic core - and CF(0) - the membrane proton channel. CF(1) has five subunits: alpha(3), beta(3), gamma(1), delta(1), epsilon(1). CF(0) has three main subunits: a, b and c.

It localises to the cell inner membrane. Functionally, produces ATP from ADP in the presence of a proton gradient across the membrane. The gamma chain is believed to be important in regulating ATPase activity and the flow of protons through the CF(0) complex. The protein is ATP synthase gamma chain of Rickettsia felis (strain ATCC VR-1525 / URRWXCal2) (Rickettsia azadi).